A 354-amino-acid polypeptide reads, in one-letter code: Ferredoxin--NADP reductase (354 aa).

Residues Asp-39, Gln-47, Tyr-52, Val-92, Phe-127, Asp-296, and Thr-337 each contribute to the FAD site.

It belongs to the ferredoxin--NADP reductase type 2 family. As to quaternary structure, homodimer. It depends on FAD as a cofactor.

The enzyme catalyses 2 reduced [2Fe-2S]-[ferredoxin] + NADP(+) + H(+) = 2 oxidized [2Fe-2S]-[ferredoxin] + NADPH. This Albidiferax ferrireducens (strain ATCC BAA-621 / DSM 15236 / T118) (Rhodoferax ferrireducens) protein is Ferredoxin--NADP reductase.